The following is a 316-amino-acid chain: MLQKIILATVVAFVLSLASGPLFIPYLRKLKFGQKVREDGPKSHIKKSGTPTMGGIMFITATVISTLIFSHWNKYLAILLLGFLGYGLIGFADDFLKVYFKRPLGLKAREKLIGQFLLAIIISYFAQEYVGTEVIFPFLKTTIDLGNFYIPFIVFVIVGTVNSVNLTDGLDGLAAGVSFIVMAFFTMTALFLNNITYGAFSAALTGGLLGFLRYNRHPAEIFMGDTGSLAIGGAIATAAVLTKLPLILPLIGIIYVAEAFSVIIQVLSFKLFGKRVFKMSPLHHHFELSGWQEQNVVYAFWIVTLIAMFLSFYSLS.

The next 10 helical transmembrane spans lie at 5 to 25, 49 to 69, 76 to 96, 116 to 136, 141 to 161, 172 to 192, 195 to 212, 221 to 241, 244 to 264, and 296 to 316; these read IILATVVAFVLSLASGPLFIP, GTPTMGGIMFITATVISTLIF, LAILLLGFLGYGLIGFADDFL, FLLAIIISYFAQEYVGTEVIF, TTIDLGNFYIPFIVFVIVGTV, GLAAGVSFIVMAFFTMTALFL, ITYGAFSAALTGGLLGFL, IFMGDTGSLAIGGAIATAAVL, LPLILPLIGIIYVAEAFSVII, and VVYAFWIVTLIAMFLSFYSLS.

Belongs to the glycosyltransferase 4 family. MraY subfamily. Mg(2+) is required as a cofactor.

It is found in the cell membrane. The catalysed reaction is UDP-N-acetyl-alpha-D-muramoyl-L-alanyl-gamma-D-glutamyl-meso-2,6-diaminopimeloyl-D-alanyl-D-alanine + di-trans,octa-cis-undecaprenyl phosphate = di-trans,octa-cis-undecaprenyl diphospho-N-acetyl-alpha-D-muramoyl-L-alanyl-D-glutamyl-meso-2,6-diaminopimeloyl-D-alanyl-D-alanine + UMP. Its pathway is cell wall biogenesis; peptidoglycan biosynthesis. In terms of biological role, catalyzes the initial step of the lipid cycle reactions in the biosynthesis of the cell wall peptidoglycan: transfers peptidoglycan precursor phospho-MurNAc-pentapeptide from UDP-MurNAc-pentapeptide onto the lipid carrier undecaprenyl phosphate, yielding undecaprenyl-pyrophosphoryl-MurNAc-pentapeptide, known as lipid I. This chain is Phospho-N-acetylmuramoyl-pentapeptide-transferase, found in Thermoanaerobacter pseudethanolicus (strain ATCC 33223 / 39E) (Clostridium thermohydrosulfuricum).